Here is a 324-residue protein sequence, read N- to C-terminus: Endochitinase B (324 aa).

A signal peptide spans 1–23 (MRLREFTALSSLLFSLLLLSASA). In terms of domain architecture, Chitin-binding type-1 spans 24 to 65 (EQCGSQAGGARCASGLCCSKFGWCGNTNDYCGPGNCQSQCPG). 4 disulfides stabilise this stretch: Cys-26/Cys-41, Cys-35/Cys-47, Cys-40/Cys-54, and Cys-59/Cys-63. 4-hydroxyproline occurs at positions 67 and 69. 3 disulfides stabilise this stretch: Cys-96/Cys-158, Cys-170/Cys-178, and Cys-277/Cys-309. The active-site Proton donor is Glu-140. Residues 318–324 (GLLVDTM) constitute a propeptide, removed in mature form.

The protein belongs to the glycosyl hydrolase 19 family. Chitinase class I subfamily. In terms of processing, the 4-hydroxyproline residues are not glycosylated in this plant vacuolar protein.

The protein localises to the vacuole. It carries out the reaction Random endo-hydrolysis of N-acetyl-beta-D-glucosaminide (1-&gt;4)-beta-linkages in chitin and chitodextrins.. Defense against chitin-containing fungal pathogens. The chain is Endochitinase B (CHN50) from Nicotiana tabacum (Common tobacco).